The chain runs to 145 residues: Selenoprotein M (145 aa).

A signal peptide spans 1-23; it reads MSILLSPPSLLLLLAALVAPATS. Residues Cys45 and Sec48 each act as nucleophile in the active site. A cross-link (cysteinyl-selenocysteine (Cys-Sec)) is located at residues 45–48; the sequence is CGGU. Position 48 (Sec48) is a non-standard amino acid, selenocysteine. Residues 125–145 form a disordered region; the sequence is PPEYLWAPAKPPEEASEHDDL.

Belongs to the selenoprotein M/F family. In terms of tissue distribution, widely expressed. Highly expressed in brain.

It localises to the cytoplasm. It is found in the perinuclear region. The protein localises to the endoplasmic reticulum. Its subcellular location is the golgi apparatus. In terms of biological role, may function as a thiol-disulfide oxidoreductase that participates in disulfide bond formation. This Mus musculus (Mouse) protein is Selenoprotein M.